Here is a 268-residue protein sequence, read N- to C-terminus: MKPIKTSWADEVEADYVDGLPPAKEYIEGEYKYVTEYKYNEDGKKIKVVRTFKIKKQVVSKAVAKRRNWVKFGESSSDKPGPNSQTTMAAEEIFMLFMGSKEFEQTNELQIDPGKNIAKCRICNGEHWSVNCPYKGTAMDSKTMMENKATAAAAAVGDPKSGKYVPPFLKEGGASGKPWARERDDSSAVRISNLSESMTEVDLEELVKKIGPHTKMYLAREKNTGLCKGFAYVHFKFRQDAAAAIEILNGHGYDHLILCVEWSKPQNQ.

An RRM domain is found at 187-265; sequence SAVRISNLSE…LILCVEWSKP (79 aa).

This sequence belongs to the eIF-3 subunit G family. In terms of assembly, component of the eukaryotic translation initiation factor 3 (eIF-3) complex. The eIF-3 complex interacts with pix.

The protein localises to the cytoplasm. Functionally, RNA-binding component of the eukaryotic translation initiation factor 3 (eIF-3) complex, which is involved in protein synthesis of a specialized repertoire of mRNAs and, together with other initiation factors, stimulates binding of mRNA and methionyl-tRNAi to the 40S ribosome. The eIF-3 complex specifically targets and initiates translation of a subset of mRNAs involved in cell proliferation. This subunit can bind 18S rRNA. This is Eukaryotic translation initiation factor 3 subunit G-2 from Drosophila willistoni (Fruit fly).